The sequence spans 170 residues: NADH-quinone oxidoreductase subunit B (170 aa).

Cys-37, Cys-38, Cys-102, and Cys-131 together coordinate [4Fe-4S] cluster.

Belongs to the complex I 20 kDa subunit family. As to quaternary structure, NDH-1 is composed of 14 different subunits. Subunits NuoB, C, D, E, F, and G constitute the peripheral sector of the complex. Requires [4Fe-4S] cluster as cofactor.

The protein localises to the cell inner membrane. The enzyme catalyses a quinone + NADH + 5 H(+)(in) = a quinol + NAD(+) + 4 H(+)(out). NDH-1 shuttles electrons from NADH, via FMN and iron-sulfur (Fe-S) centers, to quinones in the respiratory chain. The immediate electron acceptor for the enzyme in this species is believed to be ubiquinone. Couples the redox reaction to proton translocation (for every two electrons transferred, four hydrogen ions are translocated across the cytoplasmic membrane), and thus conserves the redox energy in a proton gradient. This chain is NADH-quinone oxidoreductase subunit B, found in Geobacter sp. (strain M21).